The primary structure comprises 445 residues: D-serine transporter DsdX (445 aa).

Helical transmembrane passes span 5 to 25, 29 to 49, 57 to 77, 106 to 126, 140 to 160, 178 to 198, 224 to 244, 265 to 285, 302 to 322, 343 to 363, 385 to 405, and 425 to 445; these read IWVVSTLLISIVLIVLTIVKF, PFLALLLASFFVGTMMGMGPL, SGIGGTLGFLAAVIGLGTILG, VLVGLICGITLFVEVGVVLLI, LLKLAIPLCTALMAVHCVVPP, VIVYGLLVGLMASLIGGPLFL, TLPSLGATLFTVLLPIALMLV, IGNPITATFIAVFVAYYVLGI, FGSIANILLIIGAGGAFNAIL, ILLAWLVALILHAAVGSATVA, IIAIAIGSGAIGCTIVTDSLF, and TATFIASVIALAGTFLLSFII.

Belongs to the GntP permease family.

The protein localises to the cell inner membrane. Its activity is regulated as follows. Uptake of D-serine is inhibited by carbonyl cyanide m-chlorophenylhydrazone (CCCP), and at high concentrations of D-threonine, stimulated by D-cycloserine and not affected by D-alanine or glycine. Protein that allows transport of D-serine across the inner membrane, does not transport D-alanine nor probably glycine. Is probably a H(+) symporter, as CCCP inhibits transport. Transports D-serine more efficiently than CycA. This Escherichia coli O6:H1 (strain CFT073 / ATCC 700928 / UPEC) protein is D-serine transporter DsdX (dsdX).